Consider the following 251-residue polypeptide: 14-3-3-like protein (251 aa).

Belongs to the 14-3-3 family.

This is 14-3-3-like protein from Fucus vesiculosus (Bladder wrack).